We begin with the raw amino-acid sequence, 794 residues long: Zinc finger protein 148 (794 aa).

A Glycyl lysine isopeptide (Lys-Gly) (interchain with G-Cter in SUMO2) cross-link involves residue Lys6. Ser51 bears the Phosphoserine mark. Residues Lys88, Lys115, and Lys132 each participate in a glycyl lysine isopeptide (Lys-Gly) (interchain with G-Cter in SUMO2) cross-link. A C2H2-type 1 zinc finger spans residues 171 to 193 (HVCEHCNAAFRTNYHLQRHVFIH). Thr194 is modified (phosphothreonine). 2 consecutive C2H2-type zinc fingers follow at residues 199-221 (FQCS…EKIH) and 227-249 (FRCD…KRTH). At Ser250 the chain carries Phosphoserine. The segment at 255-278 (YQCEYCLQYFSRTDRVLKHKRMCH) adopts a C2H2-type 4 zinc-finger fold. A Glycyl lysine isopeptide (Lys-Gly) (interchain with G-Cter in SUMO2) cross-link involves residue Lys291. Residues 298–338 (EEDSGFSTSPKDNSLPKKKRQKTEKKSSGMDKESSLDKSDL) are disordered. Ser301 and Ser306 each carry phosphoserine. Lys308 participates in a covalent cross-link: Glycyl lysine isopeptide (Lys-Gly) (interchain with G-Cter in SUMO2). Residues 321–338 (EKKSSGMDKESSLDKSDL) are compositionally biased toward basic and acidic residues. Lys356 is covalently cross-linked (Glycyl lysine isopeptide (Lys-Gly) (interchain with G-Cter in SUMO1); alternate). Residue Lys356 forms a Glycyl lysine isopeptide (Lys-Gly) (interchain with G-Cter in SUMO2); alternate linkage. Residue Lys402 forms a Glycyl lysine isopeptide (Lys-Gly) (interchain with G-Cter in SUMO2) linkage. At Ser412 the chain carries Phosphoserine. Glycyl lysine isopeptide (Lys-Gly) (interchain with G-Cter in SUMO2) cross-links involve residues Lys421 and Lys424. Polar residues predominate over residues 575-588 (SSEVPEVTQSENVG). A disordered region spans residues 575–596 (SSEVPEVTQSENVGSSSQASSS). Residue Lys607 is modified to N6-acetyllysine. 2 positions are modified to phosphoserine: Ser665 and Ser784. A disordered region spans residues 775-794 (NDNRAGMTSSPDATTGQTFG).

It belongs to the krueppel C2H2-type zinc-finger protein family. Interacts with HNRNPDL. Interacts with the 5FMC complex; the interaction requires association with CHTOP. Interacts with CAVIN1. Sumoylated with SUMO2. Desumoylated by SENP3, resulting in the stimulation of transcription of its target genes.

Its subcellular location is the nucleus. Functionally, involved in transcriptional regulation. Represses the transcription of a number of genes including gastrin, stromelysin and enolase. Binds to the G-rich box in the enhancer region of these genes. In Bos taurus (Bovine), this protein is Zinc finger protein 148 (ZNF148).